A 293-amino-acid chain; its full sequence is Energy-coupling factor transporter ATP-binding protein EcfA2 (293 aa).

The ABC transporter domain occupies 3–246; the sequence is ITFQKVEHRY…ADELEKIGVD (244 aa). 40 to 47 serves as a coordination point for ATP; sequence GHTGSGKS.

It belongs to the ABC transporter superfamily. Energy-coupling factor EcfA family. As to quaternary structure, forms a stable energy-coupling factor (ECF) transporter complex composed of 2 membrane-embedded substrate-binding proteins (S component), 2 ATP-binding proteins (A component) and 2 transmembrane proteins (T component).

It localises to the cell membrane. ATP-binding (A) component of a common energy-coupling factor (ECF) ABC-transporter complex. Unlike classic ABC transporters this ECF transporter provides the energy necessary to transport a number of different substrates. This chain is Energy-coupling factor transporter ATP-binding protein EcfA2, found in Bacillus cereus (strain ZK / E33L).